The sequence spans 221 residues: Glutathione S-transferase 1 (221 aa).

The GST N-terminal domain maps to 7 to 88; it reads QKMQLYSFSL…YLEEKFPENP (82 aa). Glutathione-binding positions include 17-22, Val60, 72-73, Gln112, and 116-118; these read SSCAWR, DS, and NLA. The 129-residue stretch at 93–221 folds into the GST C-terminal domain; the sequence is DLQKRALNYQ…ISPMLDEAKS (129 aa).

The protein belongs to the GST superfamily. Zeta family.

It catalyses the reaction RX + glutathione = an S-substituted glutathione + a halide anion + H(+). Conjugation of reduced glutathione to a wide number of exogenous and endogenous hydrophobic electrophiles. The chain is Glutathione S-transferase 1 (GST1) from Dianthus caryophyllus (Carnation).